The following is a 219-amino-acid chain: Imidazole glycerol phosphate synthase subunit HisH (219 aa).

One can recognise a Glutamine amidotransferase type-1 domain in the interval 4-216 (TVTVLDYGSG…VDSLPATGRN (213 aa)). Residue Cys82 is the Nucleophile of the active site. Residues His191 and Glu193 contribute to the active site.

In terms of assembly, heterodimer of HisH and HisF.

The protein resides in the cytoplasm. It catalyses the reaction 5-[(5-phospho-1-deoxy-D-ribulos-1-ylimino)methylamino]-1-(5-phospho-beta-D-ribosyl)imidazole-4-carboxamide + L-glutamine = D-erythro-1-(imidazol-4-yl)glycerol 3-phosphate + 5-amino-1-(5-phospho-beta-D-ribosyl)imidazole-4-carboxamide + L-glutamate + H(+). The catalysed reaction is L-glutamine + H2O = L-glutamate + NH4(+). The protein operates within amino-acid biosynthesis; L-histidine biosynthesis; L-histidine from 5-phospho-alpha-D-ribose 1-diphosphate: step 5/9. IGPS catalyzes the conversion of PRFAR and glutamine to IGP, AICAR and glutamate. The HisH subunit catalyzes the hydrolysis of glutamine to glutamate and ammonia as part of the synthesis of IGP and AICAR. The resulting ammonia molecule is channeled to the active site of HisF. This is Imidazole glycerol phosphate synthase subunit HisH from Renibacterium salmoninarum (strain ATCC 33209 / DSM 20767 / JCM 11484 / NBRC 15589 / NCIMB 2235).